The chain runs to 205 residues: MATKVYIVYYSTYGHVERLAQEIKKGAESVGNVEVKLWQVPEILSDEVLGKMWAPPKSDVPVITPDELVEADGIIFGFPTRFGMMAAQFKAFFDSTGGLWKTQALAGKPAGIFFSTGTQGGGQETTALTAITQLTHHGMIYVPIGYTFGADMFNMEKIKGGSPYGAGTFAGADGSRQPSDIELKQAFHQGMYIAGITKKIKQTSA.

The Flavodoxin-like domain maps to 5–192 (VYIVYYSTYG…LKQAFHQGMY (188 aa)). FMN-binding positions include 11–15 (STYGH), 112–165 (IFFS…SPYG), and H136. Y13 lines the NAD(+) pocket.

This sequence belongs to the WrbA family. The cofactor is FMN.

It carries out the reaction a quinone + NADH + H(+) = a quinol + NAD(+). It catalyses the reaction a quinone + NADPH + H(+) = a quinol + NADP(+). With respect to regulation, inhibited by dicumarol. Functionally, NAD(P)H:quinone oxidoreductase reducing quinones by a two-electron transfer mechanism. Can use either NADPH or NADH as electron donor. Can use menadione, 5-hydroxy-1,4-naphthoquinone (juglone) and 2,6-dimethoxy-p-benzoquinone (DMBQ) as substrates. Mitigates the toxicity of exogenous quinones in the rhizosphere. This Triphysaria versicolor (Yellow owl's clover) protein is Quinone-oxidoreductase QR2.